A 128-amino-acid polypeptide reads, in one-letter code: Small ribosomal subunit protein eS8 (128 aa).

It belongs to the eukaryotic ribosomal protein eS8 family. As to quaternary structure, part of the 30S ribosomal subunit.

The sequence is that of Small ribosomal subunit protein eS8 from Metallosphaera sedula (strain ATCC 51363 / DSM 5348 / JCM 9185 / NBRC 15509 / TH2).